Consider the following 168-residue polypeptide: G/U mismatch-specific DNA glycosylase (168 aa).

Belongs to the uracil-DNA glycosylase (UDG) superfamily. TDG/mug family. Binds DNA as a monomer.

It is found in the cytoplasm. The catalysed reaction is Specifically hydrolyzes mismatched double-stranded DNA and polynucleotides, releasing free uracil.. In terms of biological role, excises ethenocytosine and uracil, which can arise by alkylation or deamination of cytosine, respectively, from the corresponding mispairs with guanine in ds-DNA. It is capable of hydrolyzing the carbon-nitrogen bond between the sugar-phosphate backbone of the DNA and the mispaired base. The complementary strand guanine functions in substrate recognition. Required for DNA damage lesion repair in stationary-phase cells. The sequence is that of G/U mismatch-specific DNA glycosylase from Salmonella dublin (strain CT_02021853).